The following is a 572-amino-acid chain: Arginine--tRNA ligase (572 aa).

A 'HIGH' region motif is present at residues 122–132; sequence PNLAKEMHVGH.

It belongs to the class-I aminoacyl-tRNA synthetase family. Monomer.

It localises to the cytoplasm. The catalysed reaction is tRNA(Arg) + L-arginine + ATP = L-arginyl-tRNA(Arg) + AMP + diphosphate. The chain is Arginine--tRNA ligase from Neisseria gonorrhoeae (strain ATCC 700825 / FA 1090).